The primary structure comprises 106 residues: Nucleoid-associated protein PD_1058 (106 aa).

This sequence belongs to the YbaB/EbfC family. In terms of assembly, homodimer.

It is found in the cytoplasm. The protein localises to the nucleoid. Its function is as follows. Binds to DNA and alters its conformation. May be involved in regulation of gene expression, nucleoid organization and DNA protection. The chain is Nucleoid-associated protein PD_1058 from Xylella fastidiosa (strain Temecula1 / ATCC 700964).